Reading from the N-terminus, the 372-residue chain is Glutamine synthetase (372 aa).

One can recognise a GS beta-grasp domain in the interval 24 to 103; the sequence is VIAEYVWVDG…VLAECFNSDG (80 aa). The GS catalytic domain maps to 110-372; the sequence is HRHEANKLFQ…KEYERETNEQ (263 aa).

Belongs to the glutamine synthetase family. In terms of assembly, homooctamer.

Its subcellular location is the cytoplasm. The catalysed reaction is L-glutamate + NH4(+) + ATP = L-glutamine + ADP + phosphate + H(+). The chain is Glutamine synthetase (GLN1) from Candida glabrata (strain ATCC 2001 / BCRC 20586 / JCM 3761 / NBRC 0622 / NRRL Y-65 / CBS 138) (Yeast).